A 361-amino-acid chain; its full sequence is Free fatty acid receptor 4 (361 aa).

Residues Met-1–Thr-45 are Extracellular-facing. N-linked (GlcNAc...) asparagine glycosylation is present at Asn-21. A helical transmembrane segment spans residues Val-46–Ala-66. Residues Arg-67–Leu-77 are Cytoplasmic-facing. A helical membrane pass occupies residues Val-78 to Val-98. Residues Arg-99–His-112 lie on the Extracellular side of the membrane. Cysteines 111 and 194 form a disulfide. The chain crosses the membrane as a helical span at residues Leu-113–Ser-133. Over Leu-134–Ala-156 the chain is Cytoplasmic. Residues Val-157–Phe-177 form a helical membrane-spanning segment. Topologically, residues Arg-178–Glu-204 are extracellular. A helical transmembrane segment spans residues Ile-205–Ile-225. Residues Ser-226 to Leu-268 lie on the Cytoplasmic side of the membrane. A helical membrane pass occupies residues Leu-269–Ile-289. Over Gln-290–Asp-295 the chain is Extracellular. The chain crosses the membrane as a helical span at residues Leu-296–Leu-316. Over Asn-317–Gly-361 the chain is Cytoplasmic. Phosphothreonine is present on residues Thr-347 and Thr-349. Residues Ser-350, Ser-357, and Ser-360 each carry the phosphoserine modification.

It belongs to the G-protein coupled receptor 1 family. In terms of assembly, interacts (via C-terminus) with ARRB2 following LCFAs stimulation. Phosphorylated at two clusters of Ser and Thr residues located in the intracellular C-terminus, a prerequisite for FFAR4 internalization via an ARRB2-dependent pathway. In terms of tissue distribution, the predominant isoform in human tissues. Expressed in adipose tissue, pancreatic islets, lung and brain. Expressed in alpha cells of pancreatic islets. Expressed in primary cilia of perivascular preadipocytes of white adipose tissue (at protein level). Abundant expression in the intestinal tract. Expressed in colonic intraepithelial neuroendocrine cells.

The protein resides in the cell membrane. Its subcellular location is the endosome membrane. It localises to the lysosome membrane. The protein localises to the cell projection. It is found in the cilium membrane. G-protein-coupled receptor for long-chain fatty acids (LCFAs) with a major role in adipogenesis, energy metabolism and inflammation. Signals via G-protein and beta-arrestin pathways. LCFAs sensing initiates activation of phosphoinositidase C-linked G proteins GNAQ and GNA11 (G(q)/G(11)), inducing a variety of cellular responses via second messenger pathways such as intracellular calcium mobilization, modulation of cyclic adenosine monophosphate (cAMP) production, and mitogen-activated protein kinases (MAPKs). After LCFAs binding, associates with beta-arrestin ARRB2 that acts as an adapter protein coupling the receptor to specific downstream signaling pathways, as well as mediating receptor endocytosis. In response to dietary fats, plays an important role in the regulation of adipocyte proliferation and differentiation. Acts as a receptor for omega-3 polyunsaturated fatty acids (PUFAs) at primary cilium of perivascular preadipocytes, initiating an adipogenic program via cAMP and CTCF-dependent chromatin remodeling that ultimately results in transcriptional activation of adipogenic genes and cell cycle entry. Induces differentiation of brown adipocytes probably via autocrine and endocrine functions of FGF21 hormone. Activates brown adipocytes by initiating intracellular calcium signaling that leads to mitochondrial depolarization and fission, and overall increased mitochondrial respiration. Consequently stimulates fatty acid uptake and oxidation in mitochondria together with UCP1-mediated thermogenic respiration, eventually reducing fat mass. Regulates bi-potential differentiation of bone marrow mesenchymal stem cells toward osteoblasts or adipocytes likely by up-regulating distinct integrins. In response to dietary fats regulates hormone secretion and appetite. Stimulates GIP and GLP1 secretion from enteroendocrine cells as well as GCG secretion in pancreatic alpha cells, thereby playing a role in the regulation of blood glucose levels. Negatively regulates glucose-induced SST secretion in pancreatic delta cells. Mediates LCFAs inhibition of GHRL secretion, an appetite-controlling hormone. In taste buds, contributes to sensing of dietary fatty acids by the gustatory system. During the inflammatory response, promotes anti-inflammatory M2 macrophage differentiation in adipose tissue. Mediates the anti-inflammatory effects of omega-3 PUFAs via inhibition of NLRP3 inflammasome activation. In this pathway, interacts with adapter protein ARRB2 and inhibits the priming step triggered by Toll-like receptors (TLRs) at the level of TAK1 and TAB1. Further inhibits the activation step when ARRB2 directly associates with NLRP3, leading to inhibition of pro-inflammatory cytokine release. Mediates LCFAs anti-apoptotic effects. Its function is as follows. Receptor for LCFAs decoupled from G-protein signaling. May signal through beta-arrestin pathway. After LCFAs binding, associates with beta-arrestin ARRB2 that may act as an adapter protein coupling the receptor to specific downstream signaling pathways, as well as mediating receptor endocytosis. The sequence is that of Free fatty acid receptor 4 from Homo sapiens (Human).